A 407-amino-acid chain; its full sequence is Transcriptional regulator UL34 (407 aa).

Disordered regions lie at residues 268-330 and 388-407; these read AAGP…EELF and SPSVTPALTPVTSPITPLCI. Over residues 273-286 the composition is skewed to acidic residues; the sequence is EADENNDEGEEDDD. Positions 287 to 301 are enriched in basic and acidic residues; the sequence is ELRHSDPAPLHESKK. A compositionally biased stretch (basic residues) spans 302 to 312; it reads PRNARRPRTRV.

It belongs to the HHV-5 UL34 protein family.

The protein localises to the host nucleus. Its function is as follows. Acts as a transcriptional repressor of the US3 gene expression through a specific DNA sequence named the transcriptional repressive element (tre). The chain is Transcriptional regulator UL34 (UL34) from Human cytomegalovirus (strain Towne) (HHV-5).